Consider the following 1139-residue polypeptide: Solute carrier family 12 member 5 (1139 aa).

Disordered regions lie at residues 1-62 and 95-116; these read MSRR…KGRE and PQGS…KPVQ. Over 1-98 the chain is Cytoplasmic; that stretch reads MSRRFTVTSL…ANYTNLPQGS (98 aa). The segment covering 21 to 45 has biased composition (basic and acidic residues); the sequence is PESRRHSVADPRRLPREDVKGDGNP. Polar residues predominate over residues 46-55; sequence KESSPFINST. Phosphothreonine is present on Thr-57. Basic and acidic residues predominate over residues 98–111; that stretch reads SKEHEEAENNEGGK. The discontinuously helical transmembrane segment at 99 to 120 threads the bilayer; that stretch reads KEHEEAENNEGGKKKPVQAPRM. Lys-113 contributes to the K(+) binding site. The Extracellular segment spans residues 121-129; it reads GTFMGVYLP. A helical transmembrane segment spans residues 130–151; that stretch reads CLQNIFGVILFLRLTWVVGIAG. The Cytoplasmic portion of the chain corresponds to 152–174; sequence IMESFCMVFICCSCTMLTAISMS. The helical transmembrane segment at 175 to 203 threads the bilayer; that stretch reads AIATNGVVPAGGSYYMISRSLGPEFGGAV. Chloride is bound at residue Ala-184. At 204–229 the chain is on the extracellular side; it reads GLCFYLGTTFAGAMYILGTIEILLAY. Transmembrane regions (helical) follow at residues 230-250 and 251-276; these read LFPA…AAML and NNMR…KYVN. The Extracellular portion of the chain corresponds to 277–402; that stretch reads KFALVFLGCV…ERRGMPSVGL (126 aa). Cysteines 310 and 325 form a disulfide. N-linked (GlcNAc...) asparagine glycans are attached at residues Asn-314, Asn-333, Asn-351, and Asn-362. Cys-345 and Cys-354 are joined by a disulfide. The chain crosses the membrane as a helical span at residues 403–420; the sequence is ADGTPVDMDHPYVFSDMT. Met-410 is a binding site for K(+). Chloride-binding residues include Tyr-414 and Val-415. Over 421-429 the chain is Cytoplasmic; the sequence is SYFTLLVGI. Residues 430–453 form a helical membrane-spanning segment; sequence YFPSVTGIMAGSNRSGDLRDAQKS. Residue Asp-446 participates in K(+) binding. Topologically, residues 454–485 are extracellular; that stretch reads IPTGTILAIATTSAVYISSVVLFGACIEGVVL. A helical membrane pass occupies residues 486-513; sequence RDKFGEAVNGNLVVGTLAWPSPWVIVIG. At 514 to 534 the chain is on the cytoplasmic side; the sequence is SFFSTCGAGLQSLTGAPRLLQ. Transmembrane regions (helical) follow at residues 535-555 and 556-578; these read AISR…KANG and EPTW…ASLD. Position 569 (Glu-569) interacts with chloride. Residues 579–592 are Cytoplasmic-facing; sequence EVAPILSMFFLMCY. The next 2 membrane-spanning stretches (helical) occupy residues 593 to 615 and 616 to 632; these read MFVN…PRFR and YYHW…CLAL. The Cytoplasmic portion of the chain corresponds to 633-1139; the sequence is MFICSWYYAL…GGREVITIYS (507 aa). The interval 667–681 is scissor helix; sequence GIRGLSLSAARYALL. Thr-929 carries the phosphothreonine; by OXSR1 and STK39 modification. The tract at residues 943 to 1025 is disordered; that stretch reads HLTKNERERE…PEGEGETDPE (83 aa). Residues 945–962 show a composition bias toward basic and acidic residues; sequence TKNEREREIQSITDESRG. Acidic residues predominate over residues 982-994; that stretch reads TACDNEEKPEEEV. Positions 1003 to 1012 are enriched in low complexity; the sequence is PSCPSSSPSP. Thr-1030 is subject to Phosphothreonine; by OXSR1 and STK39. Positions 1033 to 1052 are disordered; the sequence is KDKSAAQKNKGPSPVSSEGI. Phosphoserine is present on residues Ser-1045, Ser-1048, and Ser-1049.

It belongs to the SLC12A transporter family. K/Cl co-transporter subfamily. Homodimer; adopts a domain-swap conformation at the scissor helices connecting the transmembrane domain and C-terminal domain. Heterodimer wHeterodimer with K-Cl cotransporters SLC12A6 and SLC12A7. Interacts with AP2A1. Post-translationally, phosphorylated at Thr-929 and Thr-1030 by OXSR1/OSR1 and STK39/SPAK downstream of WNK kinases (WNK1, WNK2, WNK3 or WNK4), inhibiting the potassium-chloride cotransport activity. As to expression, highly expressed in brain. Not detected in other tissues. Highly expressed in pyramidal neurons and in neurons throughout the cortex, hippocampus, the granular layer of the cerebellum and in groups of neurons throughout the brainstem. Barely detectable in dorsal-root ganglions.

It is found in the cell membrane. The protein localises to the cell projection. Its subcellular location is the dendrite. It catalyses the reaction K(+)(in) + chloride(in) = K(+)(out) + chloride(out). With respect to regulation, inhibited following phosphorylation by OXSR1/OSR1 and STK39/SPAK: phosphorylation takes place downstream of WNK kinases (WNK1, WNK2, WNK3 or WNK4) in response to hyperosmotic stress and subsequent cell shrinkage. Mediates electroneutral potassium-chloride cotransport in mature neurons and is required for neuronal Cl(-) homeostasis. As major extruder of intracellular chloride, it establishes the low neuronal Cl(-) levels required for chloride influx after binding of GABA-A and glycine to their receptors, with subsequent hyperpolarization and neuronal inhibition. Involved in the regulation of dendritic spine formation and maturation. The polypeptide is Solute carrier family 12 member 5 (Slc12a5) (Rattus norvegicus (Rat)).